Consider the following 400-residue polypeptide: Phosphoglycerate kinase (400 aa).

Substrate contacts are provided by residues 21 to 23 (DFN), Arg36, 59 to 62 (HCSR), Arg118, and Arg151. ATP is bound by residues Lys201, Glu323, and 353 to 356 (GGDT).

This sequence belongs to the phosphoglycerate kinase family. In terms of assembly, monomer.

The protein resides in the cytoplasm. The catalysed reaction is (2R)-3-phosphoglycerate + ATP = (2R)-3-phospho-glyceroyl phosphate + ADP. Its pathway is carbohydrate degradation; glycolysis; pyruvate from D-glyceraldehyde 3-phosphate: step 2/5. The protein is Phosphoglycerate kinase of Bartonella bacilliformis (strain ATCC 35685 / KC583 / Herrer 020/F12,63).